Reading from the N-terminus, the 369-residue chain is L-lactate oxidase (369 aa).

The region spanning 13–369 (EKKLNVLNLD…KNAKLLNIRY (357 aa)) is the FMN hydroxy acid dehydrogenase domain. Residue tyrosine 39 coordinates pyruvate. Residues 92-94 (PAA), serine 121, and glutamine 143 each bind FMN. Tyrosine 145 contributes to the pyruvate binding site. Threonine 171 serves as a coordination point for FMN. Residue arginine 180 coordinates pyruvate. FMN is bound by residues lysine 240 and serine 262. Pyruvate is bound by residues histidine 264 and arginine 267. The active-site Proton acceptor is the histidine 264. FMN is bound by residues 295–299 (DSGIR) and arginine 319.

This sequence belongs to the FMN-dependent alpha-hydroxy acid dehydrogenase family. As to quaternary structure, homotetramer. It depends on FMN as a cofactor.

It catalyses the reaction (S)-lactate + O2 = pyruvate + H2O2. Functionally, catalyzes the oxidation of (S)-lactate (L-lactate) to pyruvate, with a reduction of O2 to H2O2. May be involved in the utilization of L-lactate as an energy source for growth. The protein is L-lactate oxidase of Lentilactobacillus hilgardii (strain ATCC 8290 / DSM 20176 / CCUG 30140 / JCM 1155 / KCTC 3500 / NBRC 15886 / NCIMB 8040 / NRRL B-1843 / 9).